The primary structure comprises 404 residues: NADH-quinone oxidoreductase subunit D 2 (404 aa).

It belongs to the complex I 49 kDa subunit family. In terms of assembly, NDH-1 is composed of 14 different subunits. Subunits NuoB, C, D, E, F, and G constitute the peripheral sector of the complex.

It is found in the cell inner membrane. The catalysed reaction is a quinone + NADH + 5 H(+)(in) = a quinol + NAD(+) + 4 H(+)(out). Functionally, NDH-1 shuttles electrons from NADH, via FMN and iron-sulfur (Fe-S) centers, to quinones in the respiratory chain. The immediate electron acceptor for the enzyme in this species is believed to be ubiquinone. Couples the redox reaction to proton translocation (for every two electrons transferred, four hydrogen ions are translocated across the cytoplasmic membrane), and thus conserves the redox energy in a proton gradient. In Rhizobium etli (strain ATCC 51251 / DSM 11541 / JCM 21823 / NBRC 15573 / CFN 42), this protein is NADH-quinone oxidoreductase subunit D 2.